The primary structure comprises 185 residues: Ribosome-recycling factor (185 aa).

The protein belongs to the RRF family.

It localises to the cytoplasm. Functionally, responsible for the release of ribosomes from messenger RNA at the termination of protein biosynthesis. May increase the efficiency of translation by recycling ribosomes from one round of translation to another. This is Ribosome-recycling factor from Shewanella sediminis (strain HAW-EB3).